Consider the following 478-residue polypeptide: Aspartate ammonia-lyase (478 aa).

Thr104, Ser143, Thr144, Asn145, and Thr190 together coordinate L-aspartate. The segment at 320–329 is SS loop; that stretch reads GSSIMPAKVN. Ser321 serves as the catalytic Proton acceptor. 2 residues coordinate L-aspartate: Ser322 and Lys327.

This sequence belongs to the class-II fumarase/aspartase family. Aspartase subfamily. In terms of assembly, homotetramer.

It catalyses the reaction L-aspartate = fumarate + NH4(+). In terms of biological role, catalyzes the reversible conversion of L-aspartate to fumarate and ammonia. This chain is Aspartate ammonia-lyase (aspA), found in Escherichia coli O157:H7.